Reading from the N-terminus, the 417-residue chain is MYKKMIDILKAELVPALGCTEPIAIALASAKAREVLGEMPDELTVECSSNIIKNAKSVVVPMTKNLKGIEAAAIVGLIGGDANKKLEVLTTVTEEDLEETKRLLATGFCQTKFLQTTEKLHIIVRMKKGENSSLVELVKTHTGIARIEKDGVVTFEEEIEDCDDSTVDYSVLSVASILDFANQVDIEEVRPILERQIEYNTKIAKEGLRNTYGVNVGSTLLDVYGDDVKIRAKAMPAAGSDARMNGCELPVIINSGSGNQGMTVSLPVIEFGKMLDVEDEKILRALIISNLIAIYQKSEIGRLSAYCGAVSAAAGAGAGITYLYGGNEEQINQTIINTLANVSGIVCDGAKSSCAAKIASAVDAAIVATMISLKGKGFLSGDGIVKDTIQKTIDGVVTLAKEGMQETDEVIVKIMLN.

This sequence belongs to the UPF0597 family.

This Lachnoclostridium phytofermentans (strain ATCC 700394 / DSM 18823 / ISDg) (Clostridium phytofermentans) protein is UPF0597 protein Cphy_1256.